The sequence spans 295 residues: MNDKIVRATAKNGMVRIIGGITTNLVNEGSKIHECTPVAAAALGRMLTAGTLMGTTLKGEKESLTLKINGGGEAKGITITAHNDASVKGFIGNPYVTRELNDKGKLDVGGAIGKDGLLYVIKDLGLKEPYVGQVPIYSGEIAEDFAYYFTVSEQTPSAVSLGVLVDKDLSIKAAGGFIVQMMPDADELLADLVTYRLEEIPPITTLISEGKTIEEILEFIFEGMDLNILDSIEPSYKCDCSREKVEKALASIGKKDLQEIYDDGKNEEIVCNFCNTKYSFTTNDIGELLKNSIKK.

Cystine bridges form between Cys-238-Cys-240 and Cys-271-Cys-274.

Belongs to the HSP33 family. Under oxidizing conditions two disulfide bonds are formed involving the reactive cysteines. Under reducing conditions zinc is bound to the reactive cysteines and the protein is inactive.

Its subcellular location is the cytoplasm. Its function is as follows. Redox regulated molecular chaperone. Protects both thermally unfolding and oxidatively damaged proteins from irreversible aggregation. Plays an important role in the bacterial defense system toward oxidative stress. The chain is 33 kDa chaperonin from Clostridium botulinum (strain Alaska E43 / Type E3).